The following is a 241-amino-acid chain: Carboxysome assembly protein CcmN (241 aa).

The disordered stretch occupies residues 123 to 206 (GASSPTTDSV…PTAPTVVTTA (84 aa)). The span at 185–195 (QISSNRSPGES) shows a compositional bias: polar residues. A compositionally biased stretch (low complexity) spans 196–206 (TPTAPTVVTTA). The Encapsulation peptide motif lies at 219-241 (VVGQVYINQLLLTLFPERRYFSS).

It belongs to the CcmN family. In terms of assembly, interacts with full-length and the N-terminal 249 residues of CcmM; a probable CcmM-CcaA-CcmN complex can also be isolated. Interacts with CcmK.

The protein resides in the carboxysome. Its function is as follows. Required for carboxysome formation; the N-terminus interacts with CcmM which itself binds RuBisCO (ribulose bisphosphate carboxylase, rbcL-rbcS). May also contact shell protein CcmK to help assemble the carboxysome. Functionally, beta-carboxysome assembly initiates when soluble RuBisCO is condensed into a liquid matrix in a pre-carboxysome by the RbcS-like domains of probably both forms of CcmM. CcmN interacts with the N-terminus of full-length CcmM, and then recruits the CcmK major shell protein via CcmN's encapsulation peptide. Shell formation requires CcmK proteins and CcmO. CcmL caps the otherwise elongated carboxysome. Once fully encapsulated carboxysomes are formed, they migrate within the cell probably via interactions with the cytoskeleton. This chain is Carboxysome assembly protein CcmN, found in Synechocystis sp. (strain ATCC 27184 / PCC 6803 / Kazusa).